Consider the following 155-residue polypeptide: 6,7-dimethyl-8-ribityllumazine synthase (155 aa).

5-amino-6-(D-ribitylamino)uracil is bound by residues tryptophan 23, 57–59 (AWE), and 81–83 (CVI). Position 86–87 (86–87 (DT)) interacts with (2S)-2-hydroxy-3-oxobutyl phosphate. Histidine 89 serves as the catalytic Proton donor. 5-amino-6-(D-ribitylamino)uracil is bound at residue asparagine 114. Arginine 128 is a binding site for (2S)-2-hydroxy-3-oxobutyl phosphate.

The protein belongs to the DMRL synthase family. In terms of assembly, forms an icosahedral capsid composed of 60 subunits, arranged as a dodecamer of pentamers.

The catalysed reaction is (2S)-2-hydroxy-3-oxobutyl phosphate + 5-amino-6-(D-ribitylamino)uracil = 6,7-dimethyl-8-(1-D-ribityl)lumazine + phosphate + 2 H2O + H(+). It participates in cofactor biosynthesis; riboflavin biosynthesis; riboflavin from 2-hydroxy-3-oxobutyl phosphate and 5-amino-6-(D-ribitylamino)uracil: step 1/2. Its function is as follows. Catalyzes the formation of 6,7-dimethyl-8-ribityllumazine by condensation of 5-amino-6-(D-ribitylamino)uracil with 3,4-dihydroxy-2-butanone 4-phosphate. This is the penultimate step in the biosynthesis of riboflavin. The chain is 6,7-dimethyl-8-ribityllumazine synthase from Stenotrophomonas maltophilia (strain K279a).